We begin with the raw amino-acid sequence, 65 residues long: Defensin Cg-Defm (65 aa).

The N-terminal stretch at 1 to 22 (MKVFVLLTLAVLLMVSADMAFA) is a signal peptide. Residues F24, G25, and C26 each contribute to the beta-D-GlcNAc-(1-&gt;4)-Mur2Ac(oyl-L-Ala-gamma-D-Glu-L-Lys-D-Ala-D-Ala)-di-trans,octa-cis-undecaprenyl diphosphate site. Intrachain disulfides connect C26–C47, C33–C56, C37–C58, and C42–C61. A binds to membrane interface region spans residues 27–30 (PGNQ). H36 is a binding site for beta-D-GlcNAc-(1-&gt;4)-Mur2Ac(oyl-L-Ala-gamma-D-Glu-L-Lys-D-Ala-D-Ala)-di-trans,octa-cis-undecaprenyl diphosphate. Residues 48-54 (DAATLWL) are binds to membrane interface. C56 serves as a coordination point for beta-D-GlcNAc-(1-&gt;4)-Mur2Ac(oyl-L-Ala-gamma-D-Glu-L-Lys-D-Ala-D-Ala)-di-trans,octa-cis-undecaprenyl diphosphate.

The protein belongs to the invertebrate defensin family. Expressed in the mantle. Low or no expression in most of the organs analyzed, including hemocytes, heart, digestive gland, and gills.

It localises to the secreted. It is found in the target cell membrane. Functionally, antibacterial peptide mostly active against Gram-positive bacteria (M.lysodeikticus, S.aureus, and the marine bacteria, B.stationis, and M.maritypicum). It acts by selectively inhibiting peptidoglycan biosynthesis through complex formation with the cell wall precursor lipid II (1:1 molar ratio) thus inhibiting cell wall synthesis. It does not disrupt cell membranes. Is noticeably more potent than Cg-Defh1. It shows no or limited activities against Gram-negative bacteria and filamentous fungi. The protein is Defensin Cg-Defm of Magallana gigas (Pacific oyster).